Reading from the N-terminus, the 219-residue chain is Protein DCL homolog, chloroplastic (219 aa).

The N-terminal 48 residues, 1–48 (MSLASIPSSSPVASPYFRCRTYIFSFSSSPLCLYFPRGDSTSLRPRVR), are a transit peptide targeting the chloroplast. A disordered region spans residues 70–96 (LRRPRIASEESSEEEEEEEEENSEGDE). A compositionally biased stretch (acidic residues) spans 79 to 96 (ESSEEEEEEEEENSEGDE).

In terms of tissue distribution, expressed in leaves, stems, flowers and siliques.

The protein resides in the plastid. Its subcellular location is the chloroplast. In terms of biological role, required for normal plastid function and plant development. Required for correct plastid ribosome assembly. Required for processing and maturation of 4.5S rRNA. The polypeptide is Protein DCL homolog, chloroplastic (Arabidopsis thaliana (Mouse-ear cress)).